The following is a 407-amino-acid chain: Chorismate synthase (407 aa).

NADP(+) is bound by residues arginine 40 and arginine 46. Residues 138–140 (RAS) and 259–260 (QA) each bind FMN. The span at 275–284 (RRGSRAHDEM) shows a compositional bias: basic and acidic residues. The tract at residues 275–308 (RRGSRAHDEMYPGTDGVVRSTNRAGGLEGGMTNG) is disordered. Residues glycine 303, 318–322 (KPIST), and arginine 344 contribute to the FMN site.

This sequence belongs to the chorismate synthase family. As to quaternary structure, homotetramer. FMNH2 is required as a cofactor.

It catalyses the reaction 5-O-(1-carboxyvinyl)-3-phosphoshikimate = chorismate + phosphate. Its pathway is metabolic intermediate biosynthesis; chorismate biosynthesis; chorismate from D-erythrose 4-phosphate and phosphoenolpyruvate: step 7/7. Catalyzes the anti-1,4-elimination of the C-3 phosphate and the C-6 proR hydrogen from 5-enolpyruvylshikimate-3-phosphate (EPSP) to yield chorismate, which is the branch point compound that serves as the starting substrate for the three terminal pathways of aromatic amino acid biosynthesis. This reaction introduces a second double bond into the aromatic ring system. In Mycobacterium marinum (strain ATCC BAA-535 / M), this protein is Chorismate synthase.